A 368-amino-acid chain; its full sequence is Cytoskeleton protein RodZ (368 aa).

The Cytoplasmic segment spans residues 1-111; the sequence is MNTEASQDQT…LGKKHKKRDG (111 aa). Residues 19–79 enclose the HTH cro/C1-type domain; it reads LRQARESLGL…KLVHLPEDEL (61 aa). Residues 30 to 49 constitute a DNA-binding region (H-T-H motif); that stretch reads QQTVAERLCLKVSTIRDIEE. A helical; Signal-anchor for type II membrane protein membrane pass occupies residues 112 to 132; sequence WLMSFTWLIVLVVLGLTGAWW. The Periplasmic segment spans residues 133 to 368; it reads WQNHQAQQAE…RVARLTVGVE (236 aa). A disordered region spans residues 151–243; that stretch reads SAQLSQNGGQ…STEPVDTANT (93 aa). Low complexity predominate over residues 193–221; the sequence is STSAVTNSATTSSATTSSVPTTSSVPKTT. The segment covering 229 to 243 has biased composition (polar residues); sequence VPKTNSTEPVDTANT.

Belongs to the RodZ family.

It localises to the cell inner membrane. Cytoskeletal protein that is involved in cell-shape control through regulation of the length of the long axis. The protein is Cytoskeleton protein RodZ of Yersinia pseudotuberculosis serotype O:3 (strain YPIII).